The primary structure comprises 246 residues: Pyridoxine 5'-phosphate synthase (246 aa).

Position 12 (asparagine 12) interacts with 3-amino-2-oxopropyl phosphate. 14-15 contributes to the 1-deoxy-D-xylulose 5-phosphate binding site; sequence DH. Residue arginine 23 coordinates 3-amino-2-oxopropyl phosphate. Histidine 48 acts as the Proton acceptor in catalysis. 1-deoxy-D-xylulose 5-phosphate-binding residues include arginine 50 and histidine 55. Residue glutamate 75 is the Proton acceptor of the active site. A 1-deoxy-D-xylulose 5-phosphate-binding site is contributed by threonine 105. Catalysis depends on histidine 196, which acts as the Proton donor. 3-amino-2-oxopropyl phosphate is bound by residues glycine 197 and 218–219; that span reads GH.

It belongs to the PNP synthase family. In terms of assembly, homooctamer; tetramer of dimers.

The protein localises to the cytoplasm. The enzyme catalyses 3-amino-2-oxopropyl phosphate + 1-deoxy-D-xylulose 5-phosphate = pyridoxine 5'-phosphate + phosphate + 2 H2O + H(+). It participates in cofactor biosynthesis; pyridoxine 5'-phosphate biosynthesis; pyridoxine 5'-phosphate from D-erythrose 4-phosphate: step 5/5. Catalyzes the complicated ring closure reaction between the two acyclic compounds 1-deoxy-D-xylulose-5-phosphate (DXP) and 3-amino-2-oxopropyl phosphate (1-amino-acetone-3-phosphate or AAP) to form pyridoxine 5'-phosphate (PNP) and inorganic phosphate. In Thiobacillus denitrificans (strain ATCC 25259 / T1), this protein is Pyridoxine 5'-phosphate synthase.